A 235-amino-acid polypeptide reads, in one-letter code: Ubiquinone/menaquinone biosynthesis C-methyltransferase UbiE (235 aa).

Positions 59, 84, and 123 each coordinate S-adenosyl-L-methionine.

This sequence belongs to the class I-like SAM-binding methyltransferase superfamily. MenG/UbiE family.

The enzyme catalyses a 2-demethylmenaquinol + S-adenosyl-L-methionine = a menaquinol + S-adenosyl-L-homocysteine + H(+). It carries out the reaction a 2-methoxy-6-(all-trans-polyprenyl)benzene-1,4-diol + S-adenosyl-L-methionine = a 5-methoxy-2-methyl-3-(all-trans-polyprenyl)benzene-1,4-diol + S-adenosyl-L-homocysteine + H(+). It participates in quinol/quinone metabolism; menaquinone biosynthesis; menaquinol from 1,4-dihydroxy-2-naphthoate: step 2/2. The protein operates within cofactor biosynthesis; ubiquinone biosynthesis. In terms of biological role, methyltransferase required for the conversion of demethylmenaquinol (DMKH2) to menaquinol (MKH2) and the conversion of 2-polyprenyl-6-methoxy-1,4-benzoquinol (DDMQH2) to 2-polyprenyl-3-methyl-6-methoxy-1,4-benzoquinol (DMQH2). In Campylobacter jejuni subsp. jejuni serotype O:6 (strain 81116 / NCTC 11828), this protein is Ubiquinone/menaquinone biosynthesis C-methyltransferase UbiE.